The following is a 132-amino-acid chain: Small ribosomal subunit protein uS11 (132 aa).

Belongs to the universal ribosomal protein uS11 family. As to quaternary structure, part of the 30S ribosomal subunit. Interacts with proteins S7 and S18. Binds to IF-3.

Functionally, located on the platform of the 30S subunit, it bridges several disparate RNA helices of the 16S rRNA. Forms part of the Shine-Dalgarno cleft in the 70S ribosome. This Leifsonia xyli subsp. xyli (strain CTCB07) protein is Small ribosomal subunit protein uS11.